A 235-amino-acid polypeptide reads, in one-letter code: Pyridoxine 5'-phosphate synthase (235 aa).

Asn7 serves as a coordination point for 3-amino-2-oxopropyl phosphate. 9-10 (DH) is a 1-deoxy-D-xylulose 5-phosphate binding site. Arg18 contacts 3-amino-2-oxopropyl phosphate. His43 acts as the Proton acceptor in catalysis. 2 residues coordinate 1-deoxy-D-xylulose 5-phosphate: Arg45 and His50. Residue Glu70 is the Proton acceptor of the active site. Thr100 is a binding site for 1-deoxy-D-xylulose 5-phosphate. His187 (proton donor) is an active-site residue. 3-amino-2-oxopropyl phosphate contacts are provided by residues Gly188 and 209–210 (GH).

Belongs to the PNP synthase family. Homooctamer; tetramer of dimers.

Its subcellular location is the cytoplasm. The catalysed reaction is 3-amino-2-oxopropyl phosphate + 1-deoxy-D-xylulose 5-phosphate = pyridoxine 5'-phosphate + phosphate + 2 H2O + H(+). It participates in cofactor biosynthesis; pyridoxine 5'-phosphate biosynthesis; pyridoxine 5'-phosphate from D-erythrose 4-phosphate: step 5/5. In terms of biological role, catalyzes the complicated ring closure reaction between the two acyclic compounds 1-deoxy-D-xylulose-5-phosphate (DXP) and 3-amino-2-oxopropyl phosphate (1-amino-acetone-3-phosphate or AAP) to form pyridoxine 5'-phosphate (PNP) and inorganic phosphate. In Desulfatibacillum aliphaticivorans, this protein is Pyridoxine 5'-phosphate synthase.